Here is a 146-residue protein sequence, read N- to C-terminus: Type II secretion system core protein G (146 aa).

The propeptide at 1–9 (MKKMRKQTG) is leader sequence. An N-methylphenylalanine modification is found at Phe10. The chain crosses the membrane as a helical span at residues 10–30 (FTLLEVMVVVVILGILASFVV).

Belongs to the GSP G family. In terms of assembly, type II secretion system is composed of four main components: the outer membrane complex, the inner membrane complex, the cytoplasmic secretion ATPase and the periplasm-spanning pseudopilus. Forms homomultimers. Interacts with EspL. Post-translationally, cleaved by the prepilin peptidase. In terms of processing, methylated by prepilin peptidase at the amino group of the N-terminal phenylalanine once the leader sequence is cleaved.

The protein localises to the cell inner membrane. Core component of the type II secretion system required for the energy-dependent secretion of extracellular factors such as proteases and toxins from the periplasm. Pseudopilin (pilin-like) protein that polymerizes to form the pseudopilus. Further polymerization triggers pseudopilus growth. The polypeptide is Type II secretion system core protein G (epsG) (Vibrio cholerae serotype O1 (strain ATCC 39315 / El Tor Inaba N16961)).